The following is a 649-amino-acid chain: DNA mismatch repair protein MutL (649 aa).

It belongs to the DNA mismatch repair MutL/HexB family.

In terms of biological role, this protein is involved in the repair of mismatches in DNA. It is required for dam-dependent methyl-directed DNA mismatch repair. May act as a 'molecular matchmaker', a protein that promotes the formation of a stable complex between two or more DNA-binding proteins in an ATP-dependent manner without itself being part of a final effector complex. The sequence is that of DNA mismatch repair protein MutL from Streptococcus pneumoniae serotype 19F (strain G54).